The following is a 284-amino-acid chain: 3-oxoadipate:acetyl-CoA acetyltransferase (284 aa).

Positions 47, 49, and 229 each coordinate Zn(2+).

Belongs to the BKACE family. The cofactor is Zn(2+).

The catalysed reaction is 3-oxoadipate + acetyl-CoA = acetoacetate + succinyl-CoA. Its function is as follows. Catalyzes the condensation of 3-oxoadipate (beta-ketoadipate) and acetyl-CoA, forming acetoacetate and succinyl-CoA. Is likely involved is the degradation of 3-oxoadipate through an alternative pathway, within catechol degradation. The protein is 3-oxoadipate:acetyl-CoA acetyltransferase of Cupriavidus necator (strain ATCC 17699 / DSM 428 / KCTC 22496 / NCIMB 10442 / H16 / Stanier 337) (Ralstonia eutropha).